A 1046-amino-acid polypeptide reads, in one-letter code: UDP-N-acetylglucosamine--peptide N-acetylglucosaminyltransferase 110 kDa subunit (1046 aa).

Ala-2 carries the post-translational modification N-acetylalanine. Ser-3 and Ser-4 each carry phosphoserine; by GSK3-beta; alternate. Residues Ser-3 and Ser-4 are each glycosylated (O-linked (GlcNAc) serine; alternate). Ser-20 is subject to Phosphoserine. 12 TPR repeats span residues 21 to 54, 89 to 122, 123 to 156, 157 to 190, 191 to 224, 225 to 258, 259 to 292, 293 to 326, 327 to 360, 361 to 394, 395 to 428, and 429 to 462; these read FQGL…EPDN, AEAY…KPDF, IDGY…NPDL, YCVR…QPNF, AVAW…DPNF, LDAY…SPNH, AVVH…QPHF, PDAY…CPTH, ADSL…FPEF, AAAH…SPTF, ADAY…NPAF, and ADAH…KPDF. O-linked (GlcNAc) serine; by autocatalysis glycosylation occurs at Ser-399. Thr-454 carries the post-translational modification Phosphothreonine. The stretch at 463–473 is one TPR 13; truncated repeat; it reads PDAYCNLAHCL. The DFP motif signature appears at 464–466; it reads DAY. The Nuclear localization signal signature appears at 487–503; sequence KKLVSIVADQLEKNRLP. The active-site Proton acceptor is the His-508. UDP-binding positions include Gln-849, Lys-852, 906–908, 911–914, 930–932, and Asp-935; these read APK, HVRR, and HTT. Tyr-989 is modified (phosphotyrosine). The required for phosphatidylinositol 3,4,5-triphosphate binding stretch occupies residues 991-1010; the sequence is KKIRGKVWKQRISSPLFNTK.

The protein belongs to the glycosyltransferase 41 family. O-GlcNAc transferase subfamily. In terms of assembly, monomer; may exist in different oligomerization states in cells. Homotrimer, oligomerizes via TPR repeats 6 and 7. Trimerization is not necessary for activity in vitro, however it increases affinity for UDP-GlcNAc. Component of a THAP1/THAP3-HCFC1-OGT complex. Component of the NSL complex at least composed of MOF/KAT8, KANSL1, KANSL2, KANSL3, MCRS1, PHF20, OGT1/OGT, WDR5 and HCFC1. Found in a complex with KIF5B, RHOT1, RHOT2 and TRAK1. Found in a complex composed of at least SINHCAF, SIN3A, HDAC1, SAP30, RBBP4, OGT and TET1. Component of a complex composed of KMT2E/MLL5, OGT and USP7; the complex stabilizes KMT2E/MLL5, preventing KMT2E/MLL5 ubiquitination and proteasomal-mediated degradation. Interacts (via TPRs 1-6) with SIN3A; the interaction mediates transcriptional repression in parallel with histone deacetylase. Interacts (via TPR 5-6) with TET1, TET2 and TET3. Interacts (via TPR repeats 6 and 7) with ATXN10. Interacts with NSD2. Interacts with PROSER1; this interaction mediates TET2 O-GlcNAcylation and stability by promoting the interaction between OGT and TET2. Post-translationally, ubiquitinated by the SCF(FBXO31) complex, leading to its proteasomal degradation. In terms of processing, phosphorylation on Ser-3 or Ser-4 by GSK3-beta positively regulates its activity. Phosphorylation at Thr-454 by AMPK promotes nuclear localization. Glycosylated via autocatalysis; O-GlcNAcylation at Ser-399 promotes nuclear localization.

The protein resides in the nucleus. Its subcellular location is the cytoplasm. The enzyme catalyses L-seryl-[protein] + UDP-N-acetyl-alpha-D-glucosamine = 3-O-(N-acetyl-beta-D-glucosaminyl)-L-seryl-[protein] + UDP + H(+). It carries out the reaction L-threonyl-[protein] + UDP-N-acetyl-alpha-D-glucosamine = 3-O-(N-acetyl-beta-D-glucosaminyl)-L-threonyl-[protein] + UDP + H(+). The protein operates within protein modification; protein glycosylation. Its activity is regulated as follows. Inhibited by UDP. Catalyzes the transfer of a single N-acetylglucosamine from UDP-GlcNAc to a serine or threonine residue in cytoplasmic and nuclear proteins resulting in their modification with a beta-linked N-acetylglucosamine (O-GlcNAc). Glycosylates a large and diverse number of proteins including histone H2B, AKT1, AMPK, ATG4B, CAPRIN1, EZH2, FNIP1, GSDMD, KRT7, LMNA, LMNB1, LMNB2, RPTOR, HOXA1, PFKL, KMT2E/MLL5, MAPT/TAU, TET2, RBL2, RET, NOD2 and HCFC1. Can regulate their cellular processes via cross-talk between glycosylation and phosphorylation or by affecting proteolytic processing. Involved in insulin resistance in muscle and adipocyte cells via glycosylating insulin signaling components and inhibiting the 'Thr-308' phosphorylation of AKT1, enhancing IRS1 phosphorylation and attenuating insulin signaling. Involved in glycolysis regulation by mediating glycosylation of 6-phosphofructokinase PFKL, inhibiting its activity. Plays a key role in chromatin structure by mediating O-GlcNAcylation of 'Ser-112' of histone H2B: recruited to CpG-rich transcription start sites of active genes via its interaction with TET proteins (TET1, TET2 or TET3). As part of the NSL complex indirectly involved in acetylation of nucleosomal histone H4 on several lysine residues. O-GlcNAcylation of 'Ser-75' of EZH2 increases its stability, and facilitating the formation of H3K27me3 by the PRC2/EED-EZH2 complex. Stabilizes KMT2E/MLL5 by mediating its glycosylation, thereby preventing KMT2E/MLL5 ubiquitination. Regulates circadian oscillation of the clock genes and glucose homeostasis in the liver. Stabilizes clock proteins BMAL1 and CLOCK through O-glycosylation, which prevents their ubiquitination and subsequent degradation. Promotes the CLOCK-BMAL1-mediated transcription of genes in the negative loop of the circadian clock such as PER1/2 and CRY1/2. O-glycosylates HCFC1 and regulates its proteolytic processing and transcriptional activity. Component of a THAP1/THAP3-HCFC1-OGT complex that is required for the regulation of the transcriptional activity of RRM1. Regulates mitochondrial motility in neurons by mediating glycosylation of TRAK1. Promotes autophagy by mediating O-glycosylation of ATG4B. Acts as a regulator of mTORC1 signaling by mediating O-glycosylation of RPTOR and FNIP1: O-GlcNAcylation of RPTOR in response to glucose sufficiency promotes activation of the mTORC1 complex. In terms of biological role, catalyzes the transfer of a single N-acetylglucosamine from UDP-GlcNAc to a serine or threonine residue. Acts on cytoplasmic and nuclear proteins resulting in their modification with a beta-linked N-acetylglucosamine (O-GlcNAc). Glycosylates a large and diverse number of proteins including histone H2B, AKT1, ATG4B, EZH2, PFKL, KMT2E/MLL5, MAPT/TAU, NOD2 and HCFC1. Can regulate their cellular processes via cross-talk between glycosylation and phosphorylation or by affecting proteolytic processing. Probably by glycosylating KMT2E/MLL5, stabilizes KMT2E/MLL5 by preventing its ubiquitination. Involved in insulin resistance in muscle and adipocyte cells via glycosylating insulin signaling components and inhibiting the 'Thr-308' phosphorylation of AKT1, enhancing IRS1 phosphorylation and attenuating insulin signaling. Involved in glycolysis regulation by mediating glycosylation of 6-phosphofructokinase PFKL, inhibiting its activity. Component of a THAP1/THAP3-HCFC1-OGT complex that is required for the regulation of the transcriptional activity of RRM1. Plays a key role in chromatin structure by mediating O-GlcNAcylation of 'Ser-112' of histone H2B: recruited to CpG-rich transcription start sites of active genes via its interaction with TET proteins (TET1, TET2 or TET3). As part of the NSL complex indirectly involved in acetylation of nucleosomal histone H4 on several lysine residues. O-GlcNAcylation of 'Ser-75' of EZH2 increases its stability, and facilitating the formation of H3K27me3 by the PRC2/EED-EZH2 complex. Regulates circadian oscillation of the clock genes and glucose homeostasis in the liver. Stabilizes clock proteins BMAL1 and CLOCK through O-glycosylation, which prevents their ubiquitination and subsequent degradation. Promotes the CLOCK-BMAL1-mediated transcription of genes in the negative loop of the circadian clock such as PER1/2 and CRY1/2. O-glycosylates HCFC1 and regulates its proteolytic processing and transcriptional activity. Regulates mitochondrial motility in neurons by mediating glycosylation of TRAK1. Glycosylates HOXA1. O-glycosylates FNIP1. Promotes autophagy by mediating O-glycosylation of ATG4B. The polypeptide is UDP-N-acetylglucosamine--peptide N-acetylglucosaminyltransferase 110 kDa subunit (OGT) (Oryctolagus cuniculus (Rabbit)).